Here is a 259-residue protein sequence, read N- to C-terminus: tRNA (guanine-N(7)-)-methyltransferase (259 aa).

The segment covering 1–11 has biased composition (basic and acidic residues); sequence MSNTDNSDKNT. Residues 1 to 29 are disordered; it reads MSNTDNSDKNTKPTGYRPPQTDFNTEFGN. Glu89, Glu114, Asp141, and Asp164 together coordinate S-adenosyl-L-methionine. Asp164 is an active-site residue. Substrate is bound by residues Lys168, Asp200, and 238–241; that span reads TKFE.

Belongs to the class I-like SAM-binding methyltransferase superfamily. TrmB family.

It catalyses the reaction guanosine(46) in tRNA + S-adenosyl-L-methionine = N(7)-methylguanosine(46) in tRNA + S-adenosyl-L-homocysteine. Its pathway is tRNA modification; N(7)-methylguanine-tRNA biosynthesis. Functionally, catalyzes the formation of N(7)-methylguanine at position 46 (m7G46) in tRNA. This Corynebacterium diphtheriae (strain ATCC 700971 / NCTC 13129 / Biotype gravis) protein is tRNA (guanine-N(7)-)-methyltransferase.